Reading from the N-terminus, the 505-residue chain is Trans-cinnamate 4-monooxygenase (505 aa).

The helical transmembrane segment at 3–23 threads the bilayer; that stretch reads LLLLEKTLLGLFIAAITAIAI. Residues 213–218 and A306 each bind (E)-cinnamate; that span reads RSRLAQ. C447 serves as a coordination point for heme.

It belongs to the cytochrome P450 family. The cofactor is heme.

The protein resides in the membrane. It carries out the reaction (E)-cinnamate + reduced [NADPH--hemoprotein reductase] + O2 = (E)-4-coumarate + oxidized [NADPH--hemoprotein reductase] + H2O + H(+). It functions in the pathway phenylpropanoid metabolism; trans-4-coumarate biosynthesis; trans-4-coumarate from trans-cinnamate: step 1/1. In terms of biological role, catalyzes the first oxidative step of the phenylpropanoid pathway in higher plants by transforming trans-cinnamate into p-coumarate. The compounds formed by this pathway are essential components for lignification, pollination, and defense against ultraviolet light, predators and pathogens. This chain is Trans-cinnamate 4-monooxygenase (CYP73A14), found in Glycyrrhiza echinata (Licorice).